The chain runs to 37 residues: Large ribosomal subunit protein bL36 (37 aa).

It belongs to the bacterial ribosomal protein bL36 family.

The chain is Large ribosomal subunit protein bL36 from Staphylococcus carnosus (strain TM300).